The sequence spans 282 residues: ATP synthase gamma chain (282 aa).

Belongs to the ATPase gamma chain family. As to quaternary structure, F-type ATPases have 2 components, CF(1) - the catalytic core - and CF(0) - the membrane proton channel. CF(1) has five subunits: alpha(3), beta(3), gamma(1), delta(1), epsilon(1). CF(0) has three main subunits: a, b and c.

It localises to the cell membrane. Produces ATP from ADP in the presence of a proton gradient across the membrane. The gamma chain is believed to be important in regulating ATPase activity and the flow of protons through the CF(0) complex. The sequence is that of ATP synthase gamma chain from Clostridium botulinum (strain Kyoto / Type A2).